Consider the following 394-residue polypeptide: Elongation factor Tu (394 aa).

One can recognise a tr-type G domain in the interval 10 to 204; that stretch reads KPHINIGTIG…AVDDNIPTPE (195 aa). Residues 19-26 form a G1 region; that stretch reads GHVDHGKT. 19 to 26 is a binding site for GTP; sequence GHVDHGKT. T26 provides a ligand contact to Mg(2+). Positions 60 to 64 are G2; it reads GITIN. Positions 81–84 are G3; the sequence is DCPG. GTP contacts are provided by residues 81-85 and 136-139; these read DCPGH and NKID. A G4 region spans residues 136 to 139; that stretch reads NKID. A G5 region spans residues 174 to 176; sequence SAL.

It belongs to the TRAFAC class translation factor GTPase superfamily. Classic translation factor GTPase family. EF-Tu/EF-1A subfamily. In terms of assembly, monomer.

The protein resides in the cytoplasm. It catalyses the reaction GTP + H2O = GDP + phosphate + H(+). In terms of biological role, GTP hydrolase that promotes the GTP-dependent binding of aminoacyl-tRNA to the A-site of ribosomes during protein biosynthesis. The protein is Elongation factor Tu of Chlamydia trachomatis serovar L2 (strain ATCC VR-902B / DSM 19102 / 434/Bu).